Consider the following 319-residue polypeptide: Formimidoylglutamase (319 aa).

Positions 127, 150, 152, 154, 242, and 244 each coordinate Mn(2+).

Belongs to the arginase family. Mn(2+) serves as cofactor.

It catalyses the reaction N-formimidoyl-L-glutamate + H2O = formamide + L-glutamate. Its pathway is amino-acid degradation; L-histidine degradation into L-glutamate; L-glutamate from N-formimidoyl-L-glutamate (hydrolase route): step 1/1. Catalyzes the conversion of N-formimidoyl-L-glutamate to L-glutamate and formamide. The chain is Formimidoylglutamase from Halalkalibacterium halodurans (strain ATCC BAA-125 / DSM 18197 / FERM 7344 / JCM 9153 / C-125) (Bacillus halodurans).